A 559-amino-acid polypeptide reads, in one-letter code: Nucleolar protein 12 (559 aa).

The tract at residues 24–194 is disordered; the sequence is ASSAGPVQAP…AGNESDIPVH (171 aa). Residues 44–56 show a composition bias toward basic and acidic residues; it reads QKVREPAKPKVHL. The segment covering 57–110 has biased composition (acidic residues); sequence EEDDEVLSEISEELSFEEDGPSDEDEDEDEDEENSEQEDGSGDEQEEEESEDVD. Over residues 141–180 the composition is skewed to basic and acidic residues; sequence NDNDDLEGKYLDKVAAEEEADRAGKRQKNDALTKTEKPAV. RRM domains are found at residues 211 to 320 and 328 to 432; these read RTVF…SVAH and RCVF…RAKD. The disordered stretch occupies residues 429–559; that stretch reads RAKDPRKTAL…RASEWKKKKN (131 aa). Basic and acidic residues-rich tracts occupy residues 516–532 and 550–559; these read EGRRASARDGLPKDLKQ and RASEWKKKKN.

This sequence belongs to the RRM RBM34 family.

The protein resides in the nucleus. It localises to the nucleolus. In terms of biological role, involved in pre-25S rRNA processing. The sequence is that of Nucleolar protein 12 (NOP12) from Gibberella zeae (strain ATCC MYA-4620 / CBS 123657 / FGSC 9075 / NRRL 31084 / PH-1) (Wheat head blight fungus).